Consider the following 470-residue polypeptide: Argininosuccinate lyase (470 aa).

It belongs to the lyase 1 family. Argininosuccinate lyase subfamily.

It is found in the cytoplasm. The catalysed reaction is 2-(N(omega)-L-arginino)succinate = fumarate + L-arginine. It functions in the pathway amino-acid biosynthesis; L-arginine biosynthesis; L-arginine from L-ornithine and carbamoyl phosphate: step 3/3. The protein is Argininosuccinate lyase of Mycobacterium leprae (strain Br4923).